The following is a 284-amino-acid chain: L-ribulose-5-phosphate 3-epimerase UlaE (284 aa).

Belongs to the L-ribulose-5-phosphate 3-epimerase family.

The enzyme catalyses L-ribulose 5-phosphate = L-xylulose 5-phosphate. It participates in cofactor degradation; L-ascorbate degradation; D-xylulose 5-phosphate from L-ascorbate: step 3/4. Its function is as follows. Catalyzes the isomerization of L-xylulose-5-phosphate to L-ribulose-5-phosphate. Is involved in the anaerobic L-ascorbate utilization. This is L-ribulose-5-phosphate 3-epimerase UlaE from Shigella flexneri.